A 136-amino-acid polypeptide reads, in one-letter code: Small ribosomal subunit protein eS19 (136 aa).

Lys23 bears the N6-acetyllysine mark. Position 67 is an omega-N-methylarginine (Arg67). N6-acetyllysine is present on residues Lys111 and Lys115. A disordered region spans residues 116–136 (DQDGGRKLTPQGQRDLDRIAG).

The protein belongs to the eukaryotic ribosomal protein eS19 family. In terms of assembly, component of the small ribosomal subunit. Part of the small subunit (SSU) processome, composed of more than 70 proteins and the RNA chaperone small nucleolar RNA (snoRNA) U3. Interacts with RPS19BP1; the interaction is direct and mediates the integration of RPS19 in state post-A1. Interacts with RPS19BP1.

It localises to the cytoplasm. The protein resides in the nucleus. Its subcellular location is the nucleolus. Functionally, component of the small ribosomal subunit. The ribosome is a large ribonucleoprotein complex responsible for the synthesis of proteins in the cell. Required for pre-rRNA processing and maturation of 40S ribosomal subunits. Part of the small subunit (SSU) processome, first precursor of the small eukaryotic ribosomal subunit. During the assembly of the SSU processome in the nucleolus, many ribosome biogenesis factors, an RNA chaperone and ribosomal proteins associate with the nascent pre-rRNA and work in concert to generate RNA folding, modifications, rearrangements and cleavage as well as targeted degradation of pre-ribosomal RNA by the RNA exosome. The chain is Small ribosomal subunit protein eS19 (RPS19) from Sus scrofa (Pig).